Reading from the N-terminus, the 314-residue chain is Aspartate carbamoyltransferase catalytic subunit (314 aa).

Residues R55 and T56 each coordinate carbamoyl phosphate. K83 is a binding site for L-aspartate. Residues R105, H134, and Q137 each contribute to the carbamoyl phosphate site. Positions 167 and 221 each coordinate L-aspartate. G262 and P263 together coordinate carbamoyl phosphate.

It belongs to the aspartate/ornithine carbamoyltransferase superfamily. ATCase family. As to quaternary structure, heterododecamer (2C3:3R2) of six catalytic PyrB chains organized as two trimers (C3), and six regulatory PyrI chains organized as three dimers (R2).

It catalyses the reaction carbamoyl phosphate + L-aspartate = N-carbamoyl-L-aspartate + phosphate + H(+). The protein operates within pyrimidine metabolism; UMP biosynthesis via de novo pathway; (S)-dihydroorotate from bicarbonate: step 2/3. Catalyzes the condensation of carbamoyl phosphate and aspartate to form carbamoyl aspartate and inorganic phosphate, the committed step in the de novo pyrimidine nucleotide biosynthesis pathway. This Corynebacterium urealyticum (strain ATCC 43042 / DSM 7109) protein is Aspartate carbamoyltransferase catalytic subunit.